A 300-amino-acid chain; its full sequence is MWFKNLQIYRLPAPWAVSAEQLAADLAPHAFQPCSSLEMQSQGWVSPRENGELVYSLNKQMLLLLGTEKKLLPTTVINQVTKIKAAEIEEQQGFKPGRKQMKEIKEEVTDDLLPRAFSVWRQTWVWIDPVNGWMVVDAGSPAKADEVIKLLVKSVDKLPLETLHVAQSPVTAMTEWLVADTAPHGFTVDQDTELRATGEGKATVRYVRHTLEADDVRRHIASGKQCTRLAMTWADKISFVLTESLTIKRVTPLDVIKENADSTAQNDEERFDSDIMLMTGELSRMLADLVAALGGEVEKK.

Belongs to the RdgC family.

The protein resides in the cytoplasm. It localises to the nucleoid. Its function is as follows. May be involved in recombination. This chain is Recombination-associated protein RdgC, found in Janthinobacterium sp. (strain Marseille) (Minibacterium massiliensis).